The following is a 317-amino-acid chain: Acetyl-coenzyme A carboxylase carboxyl transferase subunit alpha (317 aa).

Residues 40–293 form the CoA carboxyltransferase C-terminal domain; sequence LEVRVREAIL…GDVIANALAE (254 aa).

This sequence belongs to the AccA family. As to quaternary structure, acetyl-CoA carboxylase is a heterohexamer composed of biotin carboxyl carrier protein (AccB), biotin carboxylase (AccC) and two subunits each of ACCase subunit alpha (AccA) and ACCase subunit beta (AccD).

It localises to the cytoplasm. It catalyses the reaction N(6)-carboxybiotinyl-L-lysyl-[protein] + acetyl-CoA = N(6)-biotinyl-L-lysyl-[protein] + malonyl-CoA. It participates in lipid metabolism; malonyl-CoA biosynthesis; malonyl-CoA from acetyl-CoA: step 1/1. Functionally, component of the acetyl coenzyme A carboxylase (ACC) complex. First, biotin carboxylase catalyzes the carboxylation of biotin on its carrier protein (BCCP) and then the CO(2) group is transferred by the carboxyltransferase to acetyl-CoA to form malonyl-CoA. This Rhizobium etli (strain CIAT 652) protein is Acetyl-coenzyme A carboxylase carboxyl transferase subunit alpha.